We begin with the raw amino-acid sequence, 176 residues long: Disulfide bond formation protein B (176 aa).

Over 1 to 11 (MLQLTTYRNLQ) the chain is Cytoplasmic. Residues 12–28 (VFLVIMTAIGMSFALFF) traverse the membrane as a helical segment. Over 29-46 (LQRYMGFSPCPLCIFQRI) the chain is Periplasmic. Cys-38 and Cys-41 are disulfide-bonded. Residues 47–63 (GLMIMGGFALIAALFHP) form a helical membrane-spanning segment. Topologically, residues 64–70 (KSMVIRL) are cytoplasmic. A helical transmembrane segment spans residues 71–88 (LLWLGSLAGIGWAAIVAG). At 89–145 (RHVWLQHLPADQVPSCGPGLDYWLDTLPMQQVLKEVFAGSGECASIDWTFLGLSIPE) the chain is on the periplasmic side. Cys-104 and Cys-131 form a disulfide bridge. Residues 146 to 164 (QSLILFSILILTHLLILWR) traverse the membrane as a helical segment. Topologically, residues 165 to 176 (IVRPATPKPLAR) are cytoplasmic.

The protein belongs to the DsbB family.

It localises to the cell inner membrane. In terms of biological role, required for disulfide bond formation in some periplasmic proteins. Acts by oxidizing the DsbA protein. This chain is Disulfide bond formation protein B, found in Psychrobacter cryohalolentis (strain ATCC BAA-1226 / DSM 17306 / VKM B-2378 / K5).